The sequence spans 270 residues: 3-methyl-2-oxobutanoate hydroxymethyltransferase (270 aa).

Mg(2+) is bound by residues Asp-50 and Asp-89. 3-methyl-2-oxobutanoate is bound by residues 50 to 51, Asp-89, and Lys-118; that span reads DS. Residue Glu-120 participates in Mg(2+) binding. Glu-187 (proton acceptor) is an active-site residue.

The protein belongs to the PanB family. As to quaternary structure, homodecamer; pentamer of dimers. Mg(2+) is required as a cofactor.

It is found in the cytoplasm. It catalyses the reaction 3-methyl-2-oxobutanoate + (6R)-5,10-methylene-5,6,7,8-tetrahydrofolate + H2O = 2-dehydropantoate + (6S)-5,6,7,8-tetrahydrofolate. It functions in the pathway cofactor biosynthesis; (R)-pantothenate biosynthesis; (R)-pantoate from 3-methyl-2-oxobutanoate: step 1/2. Functionally, catalyzes the reversible reaction in which hydroxymethyl group from 5,10-methylenetetrahydrofolate is transferred onto alpha-ketoisovalerate to form ketopantoate. This Helicobacter pylori (strain G27) protein is 3-methyl-2-oxobutanoate hydroxymethyltransferase.